The sequence spans 100 residues: Aspartyl/glutamyl-tRNA(Asn/Gln) amidotransferase subunit C (100 aa).

This sequence belongs to the GatC family. As to quaternary structure, heterotrimer of A, B and C subunits.

It catalyses the reaction L-glutamyl-tRNA(Gln) + L-glutamine + ATP + H2O = L-glutaminyl-tRNA(Gln) + L-glutamate + ADP + phosphate + H(+). The catalysed reaction is L-aspartyl-tRNA(Asn) + L-glutamine + ATP + H2O = L-asparaginyl-tRNA(Asn) + L-glutamate + ADP + phosphate + 2 H(+). In terms of biological role, allows the formation of correctly charged Asn-tRNA(Asn) or Gln-tRNA(Gln) through the transamidation of misacylated Asp-tRNA(Asn) or Glu-tRNA(Gln) in organisms which lack either or both of asparaginyl-tRNA or glutaminyl-tRNA synthetases. The reaction takes place in the presence of glutamine and ATP through an activated phospho-Asp-tRNA(Asn) or phospho-Glu-tRNA(Gln). The polypeptide is Aspartyl/glutamyl-tRNA(Asn/Gln) amidotransferase subunit C (Streptococcus equi subsp. zooepidemicus (strain H70)).